The following is a 339-amino-acid chain: DNA-directed RNA polymerase subunit alpha (339 aa).

The alpha N-terminal domain (alpha-NTD) stretch occupies residues 1 to 235 (MTIQKNWQEL…DQLNVFVNFE (235 aa)). The segment at 251 to 339 (FNPAFLKKVD…ELAKRFEDHY (89 aa)) is alpha C-terminal domain (alpha-CTD).

The protein belongs to the RNA polymerase alpha chain family. As to quaternary structure, homodimer. The RNAP catalytic core consists of 2 alpha, 1 beta, 1 beta' and 1 omega subunit. When a sigma factor is associated with the core the holoenzyme is formed, which can initiate transcription.

The catalysed reaction is RNA(n) + a ribonucleoside 5'-triphosphate = RNA(n+1) + diphosphate. In terms of biological role, DNA-dependent RNA polymerase catalyzes the transcription of DNA into RNA using the four ribonucleoside triphosphates as substrates. The sequence is that of DNA-directed RNA polymerase subunit alpha from Rhodopseudomonas palustris (strain ATCC BAA-98 / CGA009).